The primary structure comprises 102 residues: Large ribosomal subunit protein uL24c (102 aa).

This sequence belongs to the universal ribosomal protein uL24 family. In terms of assembly, part of the 50S ribosomal subunit.

Its subcellular location is the plastid. The protein localises to the chloroplast. In terms of biological role, one of two assembly initiator proteins, it binds directly to the 5'-end of the 23S rRNA, where it nucleates assembly of the 50S subunit. The polypeptide is Large ribosomal subunit protein uL24c (rpl24) (Rhodomonas salina (Cryptomonas salina)).